The primary structure comprises 201 residues: uncharacterized protein (201 aa).

The interval methionine 1 to glycine 22 is disordered.

This is an uncharacterized protein from Tomato ringspot virus (isolate raspberry) (ToRSV).